The chain runs to 331 residues: GTP 3',8-cyclase 2 (331 aa).

The Radical SAM core domain occupies 9–234; sequence PFGRRITYLR…PSLARSGGPS (226 aa). Residue arginine 18 coordinates GTP. Residues cysteine 25 and cysteine 29 each contribute to the [4Fe-4S] cluster site. Position 31 (tyrosine 31) interacts with S-adenosyl-L-methionine. A [4Fe-4S] cluster-binding site is contributed by cysteine 32. GTP is bound at residue arginine 67. Residue glycine 71 participates in S-adenosyl-L-methionine binding. Threonine 98 is a binding site for GTP. Serine 122 provides a ligand contact to S-adenosyl-L-methionine. Residue lysine 159 coordinates GTP. Methionine 193 serves as a coordination point for S-adenosyl-L-methionine. [4Fe-4S] cluster-binding residues include cysteine 257 and cysteine 260. 262–264 lines the GTP pocket; it reads RVR. Cysteine 274 contacts [4Fe-4S] cluster.

The protein belongs to the radical SAM superfamily. MoaA family. In terms of assembly, monomer and homodimer. Requires [4Fe-4S] cluster as cofactor.

The catalysed reaction is GTP + AH2 + S-adenosyl-L-methionine = (8S)-3',8-cyclo-7,8-dihydroguanosine 5'-triphosphate + 5'-deoxyadenosine + L-methionine + A + H(+). It participates in cofactor biosynthesis; molybdopterin biosynthesis. In terms of biological role, catalyzes the cyclization of GTP to (8S)-3',8-cyclo-7,8-dihydroguanosine 5'-triphosphate. This is GTP 3',8-cyclase 2 (moaA2) from Pseudomonas aeruginosa (strain ATCC 15692 / DSM 22644 / CIP 104116 / JCM 14847 / LMG 12228 / 1C / PRS 101 / PAO1).